Reading from the N-terminus, the 455-residue chain is Glutamyl-tRNA reductase (455 aa).

Residues 49-52 (TCNR), S109, 114-116 (EAQ), and Q120 each bind substrate. C50 functions as the Nucleophile in the catalytic mechanism. Position 190–195 (190–195 (GAGAMG)) interacts with NADP(+).

This sequence belongs to the glutamyl-tRNA reductase family. As to quaternary structure, homodimer.

The enzyme catalyses (S)-4-amino-5-oxopentanoate + tRNA(Glu) + NADP(+) = L-glutamyl-tRNA(Glu) + NADPH + H(+). The protein operates within porphyrin-containing compound metabolism; protoporphyrin-IX biosynthesis; 5-aminolevulinate from L-glutamyl-tRNA(Glu): step 1/2. Catalyzes the NADPH-dependent reduction of glutamyl-tRNA(Glu) to glutamate 1-semialdehyde (GSA). The chain is Glutamyl-tRNA reductase from Salinispora tropica (strain ATCC BAA-916 / DSM 44818 / JCM 13857 / NBRC 105044 / CNB-440).